Consider the following 56-residue polypeptide: Small ribosomal subunit protein uS14 (56 aa).

Cys-21, Cys-24, Cys-39, and Cys-42 together coordinate Zn(2+).

It belongs to the universal ribosomal protein uS14 family. As to quaternary structure, component of the 40S small ribosomal subunit. Requires Zn(2+) as cofactor.

It is found in the cytoplasm. The protein resides in the cytosol. The protein localises to the rough endoplasmic reticulum. The chain is Small ribosomal subunit protein uS14 (RpS29) from Spodoptera frugiperda (Fall armyworm).